The primary structure comprises 469 residues: Cytosolic beta-glucosidase (469 aa).

Residues glutamine 17, histidine 120, and asparagine 164 each coordinate substrate. The active-site Proton donor is glutamate 165. Residue tyrosine 309 coordinates substrate. Glutamate 373 acts as the Nucleophile in catalysis. Substrate is bound by residues tryptophan 417 and 424-425 (EW).

The protein belongs to the glycosyl hydrolase 1 family. Klotho subfamily. May interact with NEU2. Post-translationally, the N-terminus is blocked. Present in small intestine (at protein level). Expressed in liver, small intestine, colon, spleen and kidney. Down-regulated in renal cell carcinomas and hepatocellular carcinomas.

The protein localises to the cytoplasm. It localises to the cytosol. It carries out the reaction Hydrolysis of terminal, non-reducing beta-D-glucosyl residues with release of beta-D-glucose.. The enzyme catalyses a beta-D-glucosyl-(1&lt;-&gt;1')-N-acylsphing-4-enine + H2O = an N-acylsphing-4-enine + D-glucose. The catalysed reaction is a beta-D-galactosyl-(1&lt;-&gt;1')-N-acylsphing-4-enine + H2O = an N-acylsphing-4-enine + D-galactose. It catalyses the reaction beta-D-glucosyl-(1&lt;-&gt;1)-sphing-4-enine + H2O = sphing-4-enine + D-glucose. It carries out the reaction beta-D-glucosyl-(1&lt;-&gt;1)-N-octadecanoylsphing-4-enine + H2O = N-octadecanoylsphing-4-enine + D-glucose. The enzyme catalyses beta-D-galactosyl-(1&lt;-&gt;1)-sphing-4-enine + H2O = sphing-4-enine + D-galactose. The catalysed reaction is beta-D-galactosyl-(1&lt;-&gt;1')-N-octadecanoylsphing-4-enine + H2O = N-octadecanoylsphing-4-enine + D-galactose. It catalyses the reaction a beta-D-xylosyl-(1&lt;-&gt;1')-N-acylsphing-4-enine + cholesterol = cholesteryl 3-beta-D-xyloside + an N-acylsphing-4-enine. Its activity is regulated as follows. Inhibited by 2,4-dinitrophenyl-2-fluoro-2-deoxy-beta-D-glucopyranoside. Inhibited by sodium taurocholate. Inhibited by alpha-1-C-nonyl-DIX/AnDIX. The glucosylceramidase activity is slightly inhibited by conduritol B epoxide/CBE while the galactosylceramidase activity is not. Functionally, neutral cytosolic beta-glycosidase with a broad substrate specificity that could play a role in the catabolism of glycosylceramides. Has a significant glucosylceramidase activity in vitro. However, that activity is relatively low and its significance in vivo is not clear. Hydrolyzes galactosylceramides/GalCers, glucosylsphingosines/GlcSphs and galactosylsphingosines/GalSphs. However, the in vivo relevance of these activities is unclear. It can also hydrolyze a broad variety of dietary glycosides including phytoestrogens, flavonols, flavones, flavanones and cyanogens in vitro and could therefore play a role in the metabolism of xenobiotics. Possesses transxylosylase activity in vitro using xylosylated ceramides/XylCers (such as beta-D-xylosyl-(1&lt;-&gt;1')-N-acylsphing-4-enine) as xylosyl donors and cholesterol as acceptor. Could also play a role in the catabolism of cytosolic sialyl free N-glycans. The protein is Cytosolic beta-glucosidase of Homo sapiens (Human).